A 338-amino-acid chain; its full sequence is Ketol-acid reductoisomerase (NADP(+)) (338 aa).

The KARI N-terminal Rossmann domain occupies 1–181 (MKVYYDKDAD…GGTRGGVIET (181 aa)). Residues 24–27 (YGSQ), Arg47, and Ser52 contribute to the NADP(+) site. Residue His107 is part of the active site. Position 133 (Gly133) interacts with NADP(+). The KARI C-terminal knotted domain occupies 182-327 (TFKEETETDL…AKLRDMMPWI (146 aa)). Residues Asp190, Glu194, Glu226, and Glu230 each coordinate Mg(2+). Ser251 lines the substrate pocket.

The protein belongs to the ketol-acid reductoisomerase family. It depends on Mg(2+) as a cofactor.

The catalysed reaction is (2R)-2,3-dihydroxy-3-methylbutanoate + NADP(+) = (2S)-2-acetolactate + NADPH + H(+). It carries out the reaction (2R,3R)-2,3-dihydroxy-3-methylpentanoate + NADP(+) = (S)-2-ethyl-2-hydroxy-3-oxobutanoate + NADPH + H(+). It functions in the pathway amino-acid biosynthesis; L-isoleucine biosynthesis; L-isoleucine from 2-oxobutanoate: step 2/4. It participates in amino-acid biosynthesis; L-valine biosynthesis; L-valine from pyruvate: step 2/4. Its function is as follows. Involved in the biosynthesis of branched-chain amino acids (BCAA). Catalyzes an alkyl-migration followed by a ketol-acid reduction of (S)-2-acetolactate (S2AL) to yield (R)-2,3-dihydroxy-isovalerate. In the isomerase reaction, S2AL is rearranged via a Mg-dependent methyl migration to produce 3-hydroxy-3-methyl-2-ketobutyrate (HMKB). In the reductase reaction, this 2-ketoacid undergoes a metal-dependent reduction by NADPH to yield (R)-2,3-dihydroxy-isovalerate. The protein is Ketol-acid reductoisomerase (NADP(+)) of Nitrosomonas europaea (strain ATCC 19718 / CIP 103999 / KCTC 2705 / NBRC 14298).